A 138-amino-acid chain; its full sequence is MRALWIVAVCLIGVEGSMIEFGKMIQEETEKNPITSYSLYGCHCGLGSKGKPKDATDRCCFVHSCCYAKLSDCSPKTNRYEYHRENGTIVCGSSTFCKKQICECDRAAAICFRENLKTYNKKYKVYLRFKCKGVPEKC.

The N-terminal stretch at 1–16 (MRALWIVAVCLIGVEG) is a signal peptide. Cystine bridges form between Cys-42-Cys-131, Cys-44-Cys-60, Cys-59-Cys-111, Cys-65-Cys-138, Cys-66-Cys-104, Cys-73-Cys-97, and Cys-91-Cys-102. Positions 121–133 (KKYKVYLRFKCKG) are important for membrane-damaging activities in eukaryotes and bacteria; heparin-binding.

This sequence belongs to the phospholipase A2 family. Group II subfamily. S49 sub-subfamily. Expressed by the venom gland.

The protein resides in the secreted. In terms of biological role, snake venom phospholipase A2 homolog that lacks enzymatic activity. Is able to suppress the acetylcholine (ACh)-evoked current mediated by alpha-7 (CHRNA7)-similar nAChRs in L.stagnalis neurons (IC(50)=2.18 uM). This activity is only partially reversible and seems to be non-competitive. This chain is Basic phospholipase A2 homolog Vur-S49, found in Vipera renardi (Steppe viper).